A 285-amino-acid polypeptide reads, in one-letter code: NADPH-dependent 7-cyano-7-deazaguanine reductase (285 aa).

91–93 (IES) is a binding site for substrate. 93-94 (SK) is a binding site for NADPH. The Thioimide intermediate role is filled by Cys-193. The active-site Proton donor is the Asp-200. Residue 232-233 (HE) coordinates substrate. Position 261–262 (261–262 (RG)) interacts with NADPH.

Belongs to the GTP cyclohydrolase I family. QueF type 2 subfamily. As to quaternary structure, homodimer.

It is found in the cytoplasm. It carries out the reaction 7-aminomethyl-7-carbaguanine + 2 NADP(+) = 7-cyano-7-deazaguanine + 2 NADPH + 3 H(+). It participates in tRNA modification; tRNA-queuosine biosynthesis. Functionally, catalyzes the NADPH-dependent reduction of 7-cyano-7-deazaguanine (preQ0) to 7-aminomethyl-7-deazaguanine (preQ1). The polypeptide is NADPH-dependent 7-cyano-7-deazaguanine reductase (Shewanella frigidimarina (strain NCIMB 400)).